A 119-amino-acid polypeptide reads, in one-letter code: Large ribosomal subunit protein bL20 (119 aa).

This sequence belongs to the bacterial ribosomal protein bL20 family.

In terms of biological role, binds directly to 23S ribosomal RNA and is necessary for the in vitro assembly process of the 50S ribosomal subunit. It is not involved in the protein synthesizing functions of that subunit. The polypeptide is Large ribosomal subunit protein bL20 (Xanthomonas campestris pv. campestris (strain 8004)).